Here is a 294-residue protein sequence, read N- to C-terminus: Acetylglutamate kinase (294 aa).

Residues 63-64 (GG), R85, and N188 each bind substrate.

Belongs to the acetylglutamate kinase family. ArgB subfamily.

It is found in the cytoplasm. The catalysed reaction is N-acetyl-L-glutamate + ATP = N-acetyl-L-glutamyl 5-phosphate + ADP. It functions in the pathway amino-acid biosynthesis; L-arginine biosynthesis; N(2)-acetyl-L-ornithine from L-glutamate: step 2/4. Catalyzes the ATP-dependent phosphorylation of N-acetyl-L-glutamate. The protein is Acetylglutamate kinase of Methanococcus aeolicus (strain ATCC BAA-1280 / DSM 17508 / OCM 812 / Nankai-3).